A 943-amino-acid polypeptide reads, in one-letter code: Receptor-like protein 35 (943 aa).

Positions 1-31 (MTGSWNPTSIIIPVTLSFLLSFIHNFADVVA) are cleaved as a signal peptide. The Extracellular segment spans residues 32 to 897 (APTRHLCLPE…EEEDEEEISW (866 aa)). 8 N-linked (GlcNAc...) asparagine glycosylation sites follow: asparagine 67, asparagine 82, asparagine 118, asparagine 147, asparagine 171, asparagine 195, asparagine 219, and asparagine 222. LRR repeat units lie at residues 124 to 148 (LQNLRVLDLTQNDLDGEIPSSIGNL), 150 to 171 (HLTSLHLSYNQFLGLIPSSIEN), 172 to 196 (LSRLTSLHLSSNQFSGQIPSSIGNL), 198 to 220 (HLTSLELSSNQFSGQIPSSIGNL), 222 to 244 (NLTFLSLPSNDFFGQIPSSIGNL), 245 to 267 (ARLTYLYLSYNNFVGEIPSSFGN), 268 to 292 (LNQLIVLQVDSNKLSGNVPISLLNL), 293 to 317 (TRLSALLLSHNQFTGTIPNNISLLS), 319 to 340 (LMDFEASNNAFTGTLPSSLFNI), 341 to 364 (PPLIRLDLSDNQLNGTLHFGNISS), and 366 to 389 (SNLQYLIIGSNNFIGTIPRSLSRF). 2 N-linked (GlcNAc...) asparagine glycosylation sites follow: asparagine 291 and asparagine 312. 2 N-linked (GlcNAc...) asparagine glycosylation sites follow: asparagine 354 and asparagine 361. Residues 390–414 (VNLTLFDLSHLNTQCRPVDFSIFSH) form an LRR 12; degenerate repeat. Asparagine 391 carries N-linked (GlcNAc...) asparagine glycosylation. LRR repeat units lie at residues 415-439 (LKSLDDLRLSYLTTTTIDLNDILPY), 440-463 (FKTLRSLDISGNLVSATNKSSVSS), 467-490 (SQSIQSLYLSGCGITDFPEILRTQ), 491-514 (HELGFLDVSNNKIKGQVPGWLWTL), 515-537 (PNLFYLNLSNNTFISFESSSKKH), 544-568 (KPSMIHLFASNNNFTGKIPSFICGL), 569-592 (RSLNTLDLSENNYNGSIPRCMEKL), 593-617 (KSTLFVLNLRQNNLSGGLPKHIFES), 619-639 (RSLDVGHNLLVGKLPRSLIRF), 640-665 (SNLEVLNVESNRINDTFPFWLSSLSK), 667-685 (QVLVLRSNAFHGPIHEATF), 686-709 (PELRIIDISHNHFNGTLPTEYFVK), 753-777 (LTIYTALDFSGNKFEGEIPKSIGLL), 778-801 (KELLVLNLSNNAFGGHIPSSMGNL), 802-825 (TALESLDVSQNKLTGEIPQELGDL), and 827-850 (FLAYMNFSHNQLAGLVPGGTQFRR). Residue asparagine 457 is glycosylated (N-linked (GlcNAc...) asparagine). Asparagine 521, asparagine 524, asparagine 556, asparagine 582, and asparagine 605 each carry an N-linked (GlcNAc...) asparagine glycan. An N-linked (GlcNAc...) asparagine glycan is attached at asparagine 653. Asparagine 699 carries N-linked (GlcNAc...) asparagine glycosylation. Asparagine 784 and asparagine 800 each carry an N-linked (GlcNAc...) asparagine glycan. Asparagine 832, asparagine 852, and asparagine 882 each carry an N-linked (GlcNAc...) asparagine glycan. The chain crosses the membrane as a helical span at residues 898–918 (IAAAIGFIPGIVFGLTIGYIL). Over 919–943 (VSYKPEWFMNPFGRNNRRRRNTTTH) the chain is Cytoplasmic.

Belongs to the RLP family.

It is found in the cell membrane. The protein is Receptor-like protein 35 of Arabidopsis thaliana (Mouse-ear cress).